The following is a 113-amino-acid chain: Small ribosomal subunit protein bS18 (113 aa).

The interval 1 to 41 (MSEEKIVNTEAAPEAVAERPARAERSERPERPAKGPFGKKR) is disordered. The span at 16 to 33 (VAERPARAERSERPERPA) shows a compositional bias: basic and acidic residues.

Belongs to the bacterial ribosomal protein bS18 family. Part of the 30S ribosomal subunit. Forms a tight heterodimer with protein bS6.

Functionally, binds as a heterodimer with protein bS6 to the central domain of the 16S rRNA, where it helps stabilize the platform of the 30S subunit. This is Small ribosomal subunit protein bS18 from Elusimicrobium minutum (strain Pei191).